The following is a 240-amino-acid chain: Flavin-dependent thymidylate synthase (240 aa).

The ThyX domain maps to 13-235 (ITVELVKHSA…PETHAAFEKQ (223 aa)). FAD contacts are provided by residues serine 64, 87 to 89 (RHR), and glutamate 95. Residues 84-87 (EFMR), 95-99 (EESGR), and arginine 167 contribute to the dUMP site. Positions 87 to 97 (RHRIASYNEES) match the ThyX motif motif. FAD contacts are provided by residues 183-185 (NAR) and asparagine 189. Arginine 194 contacts dUMP. Arginine 194 (involved in ionization of N3 of dUMP, leading to its activation) is an active-site residue.

It belongs to the thymidylate synthase ThyX family. Homotetramer. FAD is required as a cofactor.

The enzyme catalyses dUMP + (6R)-5,10-methylene-5,6,7,8-tetrahydrofolate + NADPH + H(+) = dTMP + (6S)-5,6,7,8-tetrahydrofolate + NADP(+). The protein operates within pyrimidine metabolism; dTTP biosynthesis. Functionally, catalyzes the reductive methylation of 2'-deoxyuridine-5'-monophosphate (dUMP) to 2'-deoxythymidine-5'-monophosphate (dTMP) while utilizing 5,10-methylenetetrahydrofolate (mTHF) as the methyl donor, and NADPH and FADH(2) as the reductant. This is Flavin-dependent thymidylate synthase from Tropheryma whipplei (strain TW08/27) (Whipple's bacillus).